Here is a 170-residue protein sequence, read N- to C-terminus: E1B protein, small T-antigen (170 aa).

The protein belongs to the adenoviridae E1B 19 kDa protein family.

This Canine adenovirus serotype 2 (CAdV-2) protein is E1B protein, small T-antigen.